The following is a 646-amino-acid chain: Envelope glycoprotein (646 aa).

An N-terminal signal peptide occupies residues 1–25 (MLSVAQSSALFLLQAICILYITKLT). The Lumenal portion of the chain corresponds to 26 to 119 (IPTPVSEINL…INYLLRFISA (94 aa)). N-linked (GlcNAc...) asparagine; by host glycosylation is found at Asn72, Asn80, and Asn101. The chain crosses the membrane as a helical span at residues 120–140 (IIVYLLLSISKQGIFLFFSIV). The Cytoplasmic portion of the chain corresponds to 141–176 (HYSFKFIKNKKSCNICGNDFYFIHIDCPKPDFTKRS). The chain crosses the membrane as a helical span at residues 177-197 (DFHMMFYIILFLSLFFVVTHA). Over 198–588 (DDNVYNYYEH…KNLLYIDYKK (391 aa)) the chain is Lumenal. Asn247 and Asn336 each carry an N-linked (GlcNAc...) asparagine; by host glycan. A helical membrane pass occupies residues 589 to 609 (IIFVFLVAIISIGIFLRSPYM). Over 610-646 (LLSSILKFRKRRKVVATNRSEQLVMDDDVDVFIGPPS) the chain is Cytoplasmic.

In terms of assembly, G2 and G1 interact with each other. Post-translationally, specific enzymatic cleavages in vivo yield mature proteins including glycoprotein G1 and glycoprotein G2. In terms of processing, glycosylated. Glycosylation is essential for proper subcellular location.

The protein resides in the virion membrane. It is found in the host Golgi apparatus membrane. In terms of biological role, glycoprotein G2 and glycoprotein G1 interact with each other and are present at the surface of the virion. They are able to attach the virion to a cell receptor and to promote fusion of membranes after endocytosis of the virion. The protein is Envelope glycoprotein of European mountain ash ringspot-associated virus (isolate Sorbus aucuparia) (EMARAV).